A 403-amino-acid chain; its full sequence is Acetylornithine aminotransferase (403 aa).

Pyridoxal 5'-phosphate is bound by residues 107 to 108 and phenylalanine 140; that span reads GA. N(2)-acetyl-L-ornithine is bound at residue arginine 143. 225–228 serves as a coordination point for pyridoxal 5'-phosphate; that stretch reads DEVQ. At lysine 254 the chain carries N6-(pyridoxal phosphate)lysine. Position 282 (serine 282) interacts with N(2)-acetyl-L-ornithine. Threonine 283 provides a ligand contact to pyridoxal 5'-phosphate.

The protein belongs to the class-III pyridoxal-phosphate-dependent aminotransferase family. ArgD subfamily. Homodimer. The cofactor is pyridoxal 5'-phosphate.

The protein localises to the cytoplasm. The enzyme catalyses N(2)-acetyl-L-ornithine + 2-oxoglutarate = N-acetyl-L-glutamate 5-semialdehyde + L-glutamate. The protein operates within amino-acid biosynthesis; L-arginine biosynthesis; N(2)-acetyl-L-ornithine from L-glutamate: step 4/4. The polypeptide is Acetylornithine aminotransferase (Vibrio cholerae serotype O1 (strain ATCC 39315 / El Tor Inaba N16961)).